We begin with the raw amino-acid sequence, 248 residues long: NH(3)-dependent NAD(+) synthetase (248 aa).

31–38 (GVSGGVDS) provides a ligand contact to ATP. Aspartate 37 is a Mg(2+) binding site. Position 114 (arginine 114) interacts with deamido-NAD(+). Threonine 134 contacts ATP. Glutamate 139 contributes to the Mg(2+) binding site. The deamido-NAD(+) site is built by lysine 147 and aspartate 154. Positions 163 and 185 each coordinate ATP. Position 236-237 (236-237 (HK)) interacts with deamido-NAD(+).

Belongs to the NAD synthetase family. Homodimer.

The catalysed reaction is deamido-NAD(+) + NH4(+) + ATP = AMP + diphosphate + NAD(+) + H(+). It functions in the pathway cofactor biosynthesis; NAD(+) biosynthesis; NAD(+) from deamido-NAD(+) (ammonia route): step 1/1. In terms of biological role, catalyzes the ATP-dependent amidation of deamido-NAD to form NAD. Uses ammonia as a nitrogen source. The polypeptide is NH(3)-dependent NAD(+) synthetase (Methanoregula boonei (strain DSM 21154 / JCM 14090 / 6A8)).